Reading from the N-terminus, the 320-residue chain is MRQTKTGILLANLGTPDAPTPEAVKRYLKQFLSDRRVVDTSRLLWWPLLRGVILPLRSPRVAKLYASVWMEGGSPLMVYSRQQQQALAQRLPETPVALGMSYGSPSLESAVDELLAEHVDHIVVLPLYPQFSCSTVGAVWDELARILARKRSIPGISFIRDYADNQDYINALANSVRASFAKHGEPDLLLLSYHGIPQRYADEGDDYPQRCRTTTRELASALGMAPEKVMMTFQSRFGREPWLMPYTDETLKMLGEKGVGYIQVMCPGFAADCLETLEEIAEQNREVFLGAGGKKYEYIPALNATPEHIEMMANLVAAYR.

Fe cation-binding residues include His194 and Glu275.

This sequence belongs to the ferrochelatase family. Monomer.

It localises to the cytoplasm. It carries out the reaction heme b + 2 H(+) = protoporphyrin IX + Fe(2+). Its pathway is porphyrin-containing compound metabolism; protoheme biosynthesis; protoheme from protoporphyrin-IX: step 1/1. Functionally, catalyzes the ferrous insertion into protoporphyrin IX. The polypeptide is Ferrochelatase (Shigella boydii serotype 18 (strain CDC 3083-94 / BS512)).